The chain runs to 197 residues: ADP-ribosylation factor-like protein 6-interacting protein 1 (197 aa).

A run of 4 helical transmembrane segments spans residues 43 to 63 (VVFGVISCLYLVLWYLDLSLI), 64 to 84 (TLLSLLGVISILLNYAFPMVS), 129 to 149 (TVFVIVMSLGLLAMAWIGAII), and 150 to 170 (NNLLLMYLATLLILMWPGLQN).

Belongs to the ARL6ip family.

The protein resides in the membrane. The polypeptide is ADP-ribosylation factor-like protein 6-interacting protein 1 (Drosophila melanogaster (Fruit fly)).